The primary structure comprises 161 residues: Nucleotide-binding protein swp_1151 (161 aa).

Belongs to the YajQ family.

Its function is as follows. Nucleotide-binding protein. This is Nucleotide-binding protein swp_1151 from Shewanella piezotolerans (strain WP3 / JCM 13877).